The sequence spans 401 residues: Formate dehydrogenase (401 aa).

Substrate contacts are provided by Ile123 and Asn147. NAD(+) is bound by residues Ser148, 202 to 203 (RI), Asp222, 257 to 261 (PLHPE), Thr283, Asp309, 333 to 336 (HISG), and Ser381.

It belongs to the D-isomer specific 2-hydroxyacid dehydrogenase family. FDH subfamily. In terms of assembly, homodimer.

It localises to the cytoplasm. It carries out the reaction formate + NAD(+) = CO2 + NADH. Its function is as follows. Catalyzes the NAD(+)-dependent oxidation of formate to carbon dioxide. Formate oxidation is the final step in the methanol oxidation pathway in methylotrophic microorganisms. Has a role in the detoxification of exogenous formate in non-methylotrophic organisms. This chain is Formate dehydrogenase, found in Pseudomonas sp. (strain 101) (Achromobacter parvulus T1).